Here is a 464-residue protein sequence, read N- to C-terminus: Tryprostatin B synthase (464 aa).

Residues methionine 94 and glutamate 102 each coordinate brevianamide F. Dimethylallyl diphosphate is bound by residues arginine 113, lysine 201, and tyrosine 203. Tyrosine 205 contributes to the brevianamide F binding site. The dimethylallyl diphosphate site is built by lysine 294, tyrosine 296, glutamine 380, tyrosine 382, tyrosine 446, and tyrosine 450.

It belongs to the tryptophan dimethylallyltransferase family.

It carries out the reaction brevianamide F + dimethylallyl diphosphate = tryprostatin B + diphosphate. It participates in mycotoxin biosynthesis. Its function is as follows. Brevianamide F prenyltransferase; part of the gene cluster that mediates the biosynthesis of fumitremorgins, indole alkaloids that carry not only intriguing chemical structures, but also interesting biological and pharmacological activities. The biosynthesis of fumitremorgin-type alkaloids begins by condensation of the two amino acids L-tryptophan and L-proline to brevianamide F, catalyzed by the non-ribosomal peptide synthetase ftmA. Brevianamide F is then prenylated by the prenyltransferase ftmPT1/ftmB in the presence of dimethylallyl diphosphate, resulting in the formation of tryprostatin B. The three cytochrome P450 monooxygenases, ftmP450-1/ftmC, ftmP450-2/ftmE and ftmP450-3/FtmG, are responsible for the conversion of tryprostatin B to 6-hydroxytryprostatin B, tryprostatin A to fumitremorgin C and fumitremorgin C to 12,13-dihydroxyfumitremorgin C, respectively. The putative methyltransferase ftmMT/ftmD is expected for the conversion of 6-hydroxytryprostatin B to tryprostatin A. FtmPT2/FtmH catalyzes the prenylation of 12,13-dihydroxyfumitre-morgin C in the presence of dimethylallyl diphosphate, resulting in the formation of fumitremorgin B. Fumitremorgin B is further converted to verruculogen by ftmOx1/ftmF via the insertion of an endoperoxide bond between the two prenyl moieties. In some fungal species, verruculogen is further converted to fumitremorgin A, but the enzymes involved in this step have not been identified yet. The protein is Tryprostatin B synthase of Aspergillus fumigatus (Neosartorya fumigata).